The following is a 34-amino-acid chain: Photosystem II reaction center protein Psb30 (34 aa).

The chain crosses the membrane as a helical span at residues 5–25 (VLFQLTALIFVVAAGPLVIVL).

Belongs to the Psb30/Ycf12 family. PSII is composed of 1 copy each of membrane proteins PsbA, PsbB, PsbC, PsbD, PsbE, PsbF, PsbH, PsbI, PsbJ, PsbK, PsbL, PsbM, PsbT, PsbX, PsbY, PsbZ, Psb30/Ycf12, peripheral proteins of the oxygen-evolving complex and a large number of cofactors. It forms dimeric complexes.

Its subcellular location is the plastid. The protein resides in the chloroplast thylakoid membrane. Its function is as follows. A core subunit of photosystem II (PSII), probably helps stabilize the reaction center. The polypeptide is Photosystem II reaction center protein Psb30 (Tupiella akineta (Green alga)).